We begin with the raw amino-acid sequence, 197 residues long: Peptidyl-tRNA hydrolase (197 aa).

Position 23 (Y23) interacts with tRNA. Catalysis depends on H28, which acts as the Proton acceptor. TRNA is bound by residues F73, N75, and N121.

Belongs to the PTH family. As to quaternary structure, monomer.

It is found in the cytoplasm. The catalysed reaction is an N-acyl-L-alpha-aminoacyl-tRNA + H2O = an N-acyl-L-amino acid + a tRNA + H(+). Hydrolyzes ribosome-free peptidyl-tRNAs (with 1 or more amino acids incorporated), which drop off the ribosome during protein synthesis, or as a result of ribosome stalling. In terms of biological role, catalyzes the release of premature peptidyl moieties from peptidyl-tRNA molecules trapped in stalled 50S ribosomal subunits, and thus maintains levels of free tRNAs and 50S ribosomes. The sequence is that of Peptidyl-tRNA hydrolase from Frankia casuarinae (strain DSM 45818 / CECT 9043 / HFP020203 / CcI3).